Reading from the N-terminus, the 496-residue chain is Steroid 21-hydroxylase (496 aa).

Residue Ser-109 participates in heme b binding. Arg-232 contacts 17alpha-hydroxyprogesterone. Position 232 (Arg-232) interacts with progesterone. Heme b is bound by residues His-364, Arg-425, and Cys-427.

The protein belongs to the cytochrome P450 family. Heme b is required as a cofactor.

The protein resides in the endoplasmic reticulum membrane. The protein localises to the microsome membrane. It catalyses the reaction progesterone + reduced [NADPH--hemoprotein reductase] + O2 = 21-hydroxyprogesterone + oxidized [NADPH--hemoprotein reductase] + H2O + H(+). It carries out the reaction 17alpha-hydroxyprogesterone + reduced [NADPH--hemoprotein reductase] + O2 = 11-deoxycortisol + oxidized [NADPH--hemoprotein reductase] + H2O + H(+). Its function is as follows. A cytochrome P450 monooxygenase that plays a major role in adrenal steroidogenesis. Catalyzes the hydroxylation at C-21 of progesterone and 17alpha-hydroxyprogesterone to respectively form 11-deoxycorticosterone and 11-deoxycortisol, intermediate metabolites in the biosynthetic pathway of mineralocorticoids and glucocorticoids. Mechanistically, uses molecular oxygen inserting one oxygen atom into a substrate, and reducing the second into a water molecule, with two electrons provided by NADPH via cytochrome P450 reductase (CPR; NADPH-ferrihemoprotein reductase). In Bos taurus (Bovine), this protein is Steroid 21-hydroxylase (CYP21).